The primary structure comprises 123 residues: uncharacterized protein (123 aa).

Residues 76–97 (ENNKRKKKSEGERVRSPRTFRG) form a disordered region.

This is an uncharacterized protein from Saccharomyces cerevisiae (strain ATCC 204508 / S288c) (Baker's yeast).